A 418-amino-acid polypeptide reads, in one-letter code: Caveolae-associated protein 2 (418 aa).

Residues 1–42 (MGEDAAQAEKFQHPNTDMLQEKPSSPSPMPSSTPSPSLNLGS) are disordered. Glycine 2 is subject to N-acetylglycine. The interaction with CAVIN1 stretch occupies residues 2-168 (GEDAAQAEKF…IFQEESEIPA (167 aa)). Phosphoserine occurs at positions 27, 35, 37, and 51. Coiled coils occupy residues 61-87 (LLDK…INLE) and 126-268 (RAVR…VERR). Residues 62-100 (LDKLVNMLDAVRENQHNMEQRQINLEGSVKGIQNDLTKL) form a leucine-zipper region. Phosphothreonine is present on threonine 196. Disordered regions lie at residues 200–238 (VDLS…SLKK) and 262–382 (IVSV…ALQQ). 3 positions are modified to phosphoserine: serine 203, serine 204, and serine 218. The segment covering 203 to 219 (SSDDELPRDEEALEDSA) has biased composition (acidic residues). The span at 220–238 (EEKMEESRAEKIKRSSLKK) shows a compositional bias: basic and acidic residues. Positions 275–287 (LTPNHQKASSGKS) are enriched in polar residues. Phosphoserine is present on residues serine 283, serine 284, serine 287, serine 288, serine 293, and serine 296. Residues 303–321 (REGESSVENETKLEDQMQE) show a composition bias toward basic and acidic residues. Phosphoserine is present on residues serine 327, serine 336, serine 359, and serine 363. Residues 355 to 366 (RGNNSAVGSNAD) show a composition bias toward polar residues. At threonine 368 the chain carries Phosphothreonine. Residues 368 to 377 (TIEEDEEEEP) are compositionally biased toward acidic residues. At tyrosine 388 the chain carries Phosphotyrosine. 2 positions are modified to phosphoserine: serine 390 and serine 396. Positions 396 to 418 (SEEMEEPSEKQVQPAVLHVDQTA) are disordered.

The protein belongs to the CAVIN family. Component of the CAVIN complex composed of CAVIN1, CAVIN2, CAVIN3 and CAVIN4. Binds to PRKCA in the presence of phosphatidylserine. Interacts with CAVIN4; this augments the transactivation of NPPA by CAVIN4. Interacts with CAVIN1. Interacts with CAV3. In terms of processing, the N-terminus is blocked. As to expression, heart, adipose tissue, lung and endothelial cells (at protein level). Highly expressed in kidney and expressed at lower levels in liver, spleen, thymus, stomach, intestine and uterus.

It is found in the cytoplasm. It localises to the cytosol. The protein localises to the membrane. The protein resides in the caveola. Plays an important role in caveolar biogenesis and morphology. Regulates caveolae morphology by inducing membrane curvature within caveolae. Plays a role in caveola formation in a tissue-specific manner. Required for the formation of caveolae in the lung and fat endothelia but not in the heart endothelia. Negatively regulates the size or stability of CAVIN complexes in the lung endothelial cells. May play a role in targeting PRKCA to caveolae. This is Caveolae-associated protein 2 (Cavin2) from Mus musculus (Mouse).